Reading from the N-terminus, the 604-residue chain is Sulfite reductase [NADPH] flavoprotein alpha-component (604 aa).

The Flavodoxin-like domain occupies 65-203 (VTILYGSQTG…AAGQWHADVL (139 aa)). FMN-binding positions include 71 to 76 (SQTGNG), 118 to 121 (STHG), and 154 to 163 (LGDSSYEFFC). The FAD-binding FR-type domain occupies 236–453 (QNPYSAEVLV…VEPNKHFRLP (218 aa)). FAD is bound by residues Thr-324, Leu-358, 392 to 395 (RLYS), 410 to 412 (TVA), and 425 to 428 (GGAS). NADP(+) contacts are provided by residues 524–525 (SR), 530–534 (KIYVQ), and Asp-566. Tyr-604 serves as a coordination point for FAD.

It belongs to the NADPH-dependent sulphite reductase flavoprotein subunit CysJ family. In the N-terminal section; belongs to the flavodoxin family. The protein in the C-terminal section; belongs to the flavoprotein pyridine nucleotide cytochrome reductase family. As to quaternary structure, alpha(8)-beta(8). The alpha component is a flavoprotein, the beta component is a hemoprotein. It depends on FAD as a cofactor. The cofactor is FMN.

The enzyme catalyses hydrogen sulfide + 3 NADP(+) + 3 H2O = sulfite + 3 NADPH + 4 H(+). It functions in the pathway sulfur metabolism; hydrogen sulfide biosynthesis; hydrogen sulfide from sulfite (NADPH route): step 1/1. Functionally, component of the sulfite reductase complex that catalyzes the 6-electron reduction of sulfite to sulfide. This is one of several activities required for the biosynthesis of L-cysteine from sulfate. The flavoprotein component catalyzes the electron flow from NADPH -&gt; FAD -&gt; FMN to the hemoprotein component. This is Sulfite reductase [NADPH] flavoprotein alpha-component from Shewanella sp. (strain MR-4).